A 208-amino-acid chain; its full sequence is Ribosomal RNA large subunit methyltransferase E (208 aa).

S-adenosyl-L-methionine-binding residues include Gly63, Trp65, Asp83, Asp99, and Asp124. Lys164 functions as the Proton acceptor in the catalytic mechanism.

It belongs to the class I-like SAM-binding methyltransferase superfamily. RNA methyltransferase RlmE family.

Its subcellular location is the cytoplasm. It carries out the reaction uridine(2552) in 23S rRNA + S-adenosyl-L-methionine = 2'-O-methyluridine(2552) in 23S rRNA + S-adenosyl-L-homocysteine + H(+). Its function is as follows. Specifically methylates the uridine in position 2552 of 23S rRNA at the 2'-O position of the ribose in the fully assembled 50S ribosomal subunit. The protein is Ribosomal RNA large subunit methyltransferase E of Salmonella agona (strain SL483).